A 99-amino-acid polypeptide reads, in one-letter code: Aspartyl/glutamyl-tRNA(Asn/Gln) amidotransferase subunit C (99 aa).

This sequence belongs to the GatC family. As to quaternary structure, heterotrimer of A, B and C subunits.

The enzyme catalyses L-glutamyl-tRNA(Gln) + L-glutamine + ATP + H2O = L-glutaminyl-tRNA(Gln) + L-glutamate + ADP + phosphate + H(+). It carries out the reaction L-aspartyl-tRNA(Asn) + L-glutamine + ATP + H2O = L-asparaginyl-tRNA(Asn) + L-glutamate + ADP + phosphate + 2 H(+). Its function is as follows. Allows the formation of correctly charged Asn-tRNA(Asn) or Gln-tRNA(Gln) through the transamidation of misacylated Asp-tRNA(Asn) or Glu-tRNA(Gln) in organisms which lack either or both of asparaginyl-tRNA or glutaminyl-tRNA synthetases. The reaction takes place in the presence of glutamine and ATP through an activated phospho-Asp-tRNA(Asn) or phospho-Glu-tRNA(Gln). The polypeptide is Aspartyl/glutamyl-tRNA(Asn/Gln) amidotransferase subunit C (Mycolicibacterium vanbaalenii (strain DSM 7251 / JCM 13017 / BCRC 16820 / KCTC 9966 / NRRL B-24157 / PYR-1) (Mycobacterium vanbaalenii)).